A 914-amino-acid polypeptide reads, in one-letter code: DNA mismatch repair protein MutS (914 aa).

Positions 28–74 are disordered; that stretch reads NTNSVKDSNLNDEELSKNAELRPRKRKKSVLLQNSVGEQTEDFSNDE. 726–733 serves as a coordination point for ATP; sequence GPNASGKS.

The protein belongs to the DNA mismatch repair MutS family.

Its function is as follows. This protein is involved in the repair of mismatches in DNA. It is possible that it carries out the mismatch recognition step. This protein has a weak ATPase activity. The sequence is that of DNA mismatch repair protein MutS from Prochlorococcus marinus (strain SARG / CCMP1375 / SS120).